Here is a 92-residue protein sequence, read N- to C-terminus: Cell division protein FtsB (92 aa).

Over 1-3 the chain is Cytoplasmic; it reads MRL. A helical transmembrane segment spans residues 4–21; that stretch reads LILILLSVLVLFQYNFWF. The Periplasmic portion of the chain corresponds to 22 to 92; the sequence is GSNGFLDYRQ…VFYHIVKESK (71 aa). The stretch at 28–63 forms a coiled coil; the sequence is DYRQNAEKIKENQAENEKLSQRNQRINAEIQGLTKG.

The protein belongs to the FtsB family. As to quaternary structure, part of a complex composed of FtsB, FtsL and FtsQ.

It is found in the cell inner membrane. Essential cell division protein. May link together the upstream cell division proteins, which are predominantly cytoplasmic, with the downstream cell division proteins, which are predominantly periplasmic. This chain is Cell division protein FtsB, found in Haemophilus influenzae (strain 86-028NP).